The following is a 698-amino-acid chain: DNA ligase (698 aa).

NAD(+) contacts are provided by residues 40–44 (DGEYD), 89–90 (SL), and E123. The active-site N6-AMP-lysine intermediate is the K125. NAD(+) is bound by residues R146, E184, K300, and K324. Positions 418, 421, 436, and 442 each coordinate Zn(2+). Residues 620-698 (AGDSPLAGKT…EAEFRAMSGG (79 aa)) enclose the BRCT domain.

It belongs to the NAD-dependent DNA ligase family. LigA subfamily. Mg(2+) serves as cofactor. Mn(2+) is required as a cofactor.

The catalysed reaction is NAD(+) + (deoxyribonucleotide)n-3'-hydroxyl + 5'-phospho-(deoxyribonucleotide)m = (deoxyribonucleotide)n+m + AMP + beta-nicotinamide D-nucleotide.. In terms of biological role, DNA ligase that catalyzes the formation of phosphodiester linkages between 5'-phosphoryl and 3'-hydroxyl groups in double-stranded DNA using NAD as a coenzyme and as the energy source for the reaction. It is essential for DNA replication and repair of damaged DNA. The sequence is that of DNA ligase from Rhodospirillum rubrum (strain ATCC 11170 / ATH 1.1.1 / DSM 467 / LMG 4362 / NCIMB 8255 / S1).